Reading from the N-terminus, the 63-residue chain is Large ribosomal subunit protein bL35 (63 aa).

The protein belongs to the bacterial ribosomal protein bL35 family.

This Sulfurimonas denitrificans (strain ATCC 33889 / DSM 1251) (Thiomicrospira denitrificans (strain ATCC 33889 / DSM 1251)) protein is Large ribosomal subunit protein bL35.